The following is a 437-amino-acid chain: Adenylosuccinate lyase (437 aa).

N(6)-(1,2-dicarboxyethyl)-AMP is bound by residues 4–5 (RY), 70–72 (KHD), and 96–97 (TS). The active-site Proton donor/acceptor is His144. Residue Gln215 participates in N(6)-(1,2-dicarboxyethyl)-AMP binding. Catalysis depends on Ser265, which acts as the Proton donor/acceptor. N(6)-(1,2-dicarboxyethyl)-AMP is bound by residues Ser266, 271-273 (KKN), and 310-314 (SVERV).

This sequence belongs to the lyase 1 family. Adenylosuccinate lyase subfamily. Homooligomer. Residues from neighboring subunits contribute catalytic and substrate-binding residues to each active site.

The enzyme catalyses N(6)-(1,2-dicarboxyethyl)-AMP = fumarate + AMP. It carries out the reaction (2S)-2-[5-amino-1-(5-phospho-beta-D-ribosyl)imidazole-4-carboxamido]succinate = 5-amino-1-(5-phospho-beta-D-ribosyl)imidazole-4-carboxamide + fumarate. It functions in the pathway purine metabolism; AMP biosynthesis via de novo pathway; AMP from IMP: step 2/2. Its pathway is purine metabolism; IMP biosynthesis via de novo pathway; 5-amino-1-(5-phospho-D-ribosyl)imidazole-4-carboxamide from 5-amino-1-(5-phospho-D-ribosyl)imidazole-4-carboxylate: step 2/2. Its function is as follows. Catalyzes two reactions in de novo purine nucleotide biosynthesis. Catalyzes the breakdown of 5-aminoimidazole- (N-succinylocarboxamide) ribotide (SAICAR or 2-[5-amino-1-(5-phospho-beta-D-ribosyl)imidazole-4-carboxamido]succinate) to 5-aminoimidazole-4-carboxamide ribotide (AICAR or 5-amino-1-(5-phospho-beta-D-ribosyl)imidazole-4-carboxamide) and fumarate, and of adenylosuccinate (ADS or N(6)-(1,2-dicarboxyethyl)-AMP) to adenosine monophosphate (AMP) and fumarate. This is Adenylosuccinate lyase (purB) from Aquifex aeolicus (strain VF5).